The following is a 542-amino-acid chain: Glucose-6-phosphate isomerase (542 aa).

Catalysis depends on Glu-353, which acts as the Proton donor. Active-site residues include His-384 and Lys-508.

This sequence belongs to the GPI family.

It localises to the cytoplasm. The catalysed reaction is alpha-D-glucose 6-phosphate = beta-D-fructose 6-phosphate. Its pathway is carbohydrate biosynthesis; gluconeogenesis. It participates in carbohydrate degradation; glycolysis; D-glyceraldehyde 3-phosphate and glycerone phosphate from D-glucose: step 2/4. Catalyzes the reversible isomerization of glucose-6-phosphate to fructose-6-phosphate. The chain is Glucose-6-phosphate isomerase from Corynebacterium efficiens (strain DSM 44549 / YS-314 / AJ 12310 / JCM 11189 / NBRC 100395).